Here is an 86-residue protein sequence, read N- to C-terminus: Large ribosomal subunit protein eL31 (86 aa).

It belongs to the eukaryotic ribosomal protein eL31 family.

The protein is Large ribosomal subunit protein eL31 of Methanopyrus kandleri (strain AV19 / DSM 6324 / JCM 9639 / NBRC 100938).